Reading from the N-terminus, the 387-residue chain is Succinate--CoA ligase [ADP-forming] subunit beta (387 aa).

In terms of domain architecture, ATP-grasp spans Lys-9–Glu-244. ATP-binding positions include Lys-46, Gly-53–Gly-55, Glu-99, Cys-102, and Glu-107. Positions 199 and 213 each coordinate Mg(2+). Substrate contacts are provided by residues Asn-264 and Gly-321–Met-323.

This sequence belongs to the succinate/malate CoA ligase beta subunit family. Heterotetramer of two alpha and two beta subunits. It depends on Mg(2+) as a cofactor.

The catalysed reaction is succinate + ATP + CoA = succinyl-CoA + ADP + phosphate. It catalyses the reaction GTP + succinate + CoA = succinyl-CoA + GDP + phosphate. It participates in carbohydrate metabolism; tricarboxylic acid cycle; succinate from succinyl-CoA (ligase route): step 1/1. Succinyl-CoA synthetase functions in the citric acid cycle (TCA), coupling the hydrolysis of succinyl-CoA to the synthesis of either ATP or GTP and thus represents the only step of substrate-level phosphorylation in the TCA. The beta subunit provides nucleotide specificity of the enzyme and binds the substrate succinate, while the binding sites for coenzyme A and phosphate are found in the alpha subunit. The sequence is that of Succinate--CoA ligase [ADP-forming] subunit beta from Bdellovibrio bacteriovorus (strain ATCC 15356 / DSM 50701 / NCIMB 9529 / HD100).